The following is a 433-amino-acid chain: Enolase (433 aa).

Residues 37-59 form a disordered region; sequence RAAVPSGASTGEHEAVELRDGDK. A compositionally biased stretch (basic and acidic residues) spans 47–59; it reads GEHEAVELRDGDK. A (2R)-2-phosphoglycerate-binding site is contributed by Q166. The Proton donor role is filled by E208. 3 residues coordinate Mg(2+): D245, E291, and D318. The (2R)-2-phosphoglycerate site is built by K343, R372, S373, and K394. Residue K343 is the Proton acceptor of the active site.

The protein belongs to the enolase family. Requires Mg(2+) as cofactor.

The protein resides in the cytoplasm. It is found in the secreted. It localises to the cell surface. It carries out the reaction (2R)-2-phosphoglycerate = phosphoenolpyruvate + H2O. The protein operates within carbohydrate degradation; glycolysis; pyruvate from D-glyceraldehyde 3-phosphate: step 4/5. Functionally, catalyzes the reversible conversion of 2-phosphoglycerate (2-PG) into phosphoenolpyruvate (PEP). It is essential for the degradation of carbohydrates via glycolysis. The sequence is that of Enolase from Leptospira biflexa serovar Patoc (strain Patoc 1 / Ames).